Here is a 457-residue protein sequence, read N- to C-terminus: Karyogamy meiotic segregation protein 2 (457 aa).

Residue S134 is modified to Phosphoserine.

In terms of assembly, interacts with sad1.

It is found in the cytoplasm. The protein localises to the cytoskeleton. The protein resides in the microtubule organizing center. It localises to the spindle pole body. The polypeptide is Karyogamy meiotic segregation protein 2 (kms2) (Schizosaccharomyces pombe (strain 972 / ATCC 24843) (Fission yeast)).